Here is a 151-residue protein sequence, read N- to C-terminus: Deoxyuridine 5'-triphosphate nucleotidohydrolase (151 aa).

Substrate contacts are provided by residues 70 to 72 (RSG), Asn83, 87 to 89 (LID), and Met97.

It belongs to the dUTPase family. Mg(2+) is required as a cofactor.

It carries out the reaction dUTP + H2O = dUMP + diphosphate + H(+). It functions in the pathway pyrimidine metabolism; dUMP biosynthesis; dUMP from dCTP (dUTP route): step 2/2. Functionally, this enzyme is involved in nucleotide metabolism: it produces dUMP, the immediate precursor of thymidine nucleotides and it decreases the intracellular concentration of dUTP so that uracil cannot be incorporated into DNA. The chain is Deoxyuridine 5'-triphosphate nucleotidohydrolase from Pseudomonas entomophila (strain L48).